Reading from the N-terminus, the 308-residue chain is Probable lipid phosphate phosphatase 4 (308 aa).

Transmembrane regions (helical) follow at residues 26–46 (WLIL…EPFH), 66–86 (IPMW…FIVY), 93–113 (VYDL…TGVT), 162–182 (SFPS…AWYL), 193–213 (GHVA…LIGI), and 226–246 (VFAG…HFFP). The segment at 274 to 308 (MTRTGSRGMLGNDVEPGNSASSPHDRHRESTDSDF) is disordered. The segment covering 296-308 (PHDRHRESTDSDF) has biased composition (basic and acidic residues).

Belongs to the PA-phosphatase related phosphoesterase family.

It is found in the membrane. The polypeptide is Probable lipid phosphate phosphatase 4 (LPP4) (Arabidopsis thaliana (Mouse-ear cress)).